The primary structure comprises 344 residues: tRNA N6-adenosine threonylcarbamoyltransferase (344 aa).

Fe cation contacts are provided by H110 and H114. Substrate-binding positions include 133 to 137 (AVSGA), D166, G179, and N278. Position 303 (D303) interacts with Fe cation.

The protein belongs to the KAE1 / TsaD family. Requires Fe(2+) as cofactor.

Its subcellular location is the cytoplasm. It carries out the reaction L-threonylcarbamoyladenylate + adenosine(37) in tRNA = N(6)-L-threonylcarbamoyladenosine(37) in tRNA + AMP + H(+). In terms of biological role, required for the formation of a threonylcarbamoyl group on adenosine at position 37 (t(6)A37) in tRNAs that read codons beginning with adenine. Is involved in the transfer of the threonylcarbamoyl moiety of threonylcarbamoyl-AMP (TC-AMP) to the N6 group of A37, together with TsaE and TsaB. TsaD likely plays a direct catalytic role in this reaction. The protein is tRNA N6-adenosine threonylcarbamoyltransferase of Chlamydia caviae (strain ATCC VR-813 / DSM 19441 / 03DC25 / GPIC) (Chlamydophila caviae).